We begin with the raw amino-acid sequence, 502 residues long: Histone acetyltransferase ESA1 (502 aa).

The disordered stretch occupies residues 1–24; sequence MAGGTPGGEPTVGSGEPRLKSLAT. A Tudor-knot domain is found at 28 to 80; the sequence is IKTGCIAWVEKEGQPRRAEILSIKTTKSGKQFYCNFDNFNKRLDEWVPVIRLD. The span at 88–100 shows a compositional bias: basic and acidic residues; the sequence is PNPEKEKPKDPKA. The disordered stretch occupies residues 88-194; sequence PNPEKEKPKD…EVKREPAEFS (107 aa). Over residues 112–122 the composition is skewed to basic residues; the sequence is QPSKKSQKRPS. The span at 142-151 shows a compositional bias: polar residues; that stretch reads VENQNRQKSA. A compositionally biased stretch (basic and acidic residues) spans 184–194; that stretch reads TEVKREPAEFS. Positions 216–490 constitute an MYST-type HAT domain; it reads SRIRNISKVQ…VDPTKIQWKP (275 aa). The C2HC MYST-type zinc-finger motif lies at 249–274; sequence IFICEFCLSYYGDLKAFTRHRKKCTL. Residues 299-320 carry the ESA1-RPD3 motif motif; that stretch reads RTWCRNLCLLSKMFLDHKTLYY. Lysine 316 is modified (N6-acetyllysine; by autocatalysis). Residues 357-361 and 366-372 each bind acetyl-CoA; these read ACILT and QRKGYGR. The Proton donor/acceptor role is filled by glutamate 392. Acetyl-CoA is bound at residue serine 396.

It belongs to the MYST (SAS/MOZ) family. Component of the NuA4 histone acetyltransferase complex. In terms of processing, autoacetylation at Lys-316 is required for proper function.

It localises to the nucleus. Its subcellular location is the chromosome. The catalysed reaction is L-lysyl-[histone] + acetyl-CoA = N(6)-acetyl-L-lysyl-[histone] + CoA + H(+). It catalyses the reaction L-lysyl-[protein] + acetyl-CoA = N(6)-acetyl-L-lysyl-[protein] + CoA + H(+). The enzyme catalyses 2-hydroxyisobutanoyl-CoA + L-lysyl-[protein] = N(6)-(2-hydroxyisobutanoyl)-L-lysyl-[protein] + CoA + H(+). It carries out the reaction (2E)-butenoyl-CoA + L-lysyl-[protein] = N(6)-(2E)-butenoyl-L-lysyl-[protein] + CoA + H(+). Functionally, catalytic component of the NuA4 histone acetyltransferase (HAT) complex which is involved in epigenetic transcriptional activation of selected genes principally by acetylation of nucleosomal histones H4, H3, H2B, H2A and H2A variant H2A.Z. Acetylates histone H4 to form H4K5ac, H4K8ac, H4K12ac and H4K16ac, histone H3 to form H3K14ac, and histone H2A to form H2AK4ac and H2AK7ac. The NuA4 complex is involved in the DNA damage response and is required for chromosome segregation. The NuA4 complex plays a direct role in repair of DNA double-strand breaks (DSBs) through homologous recombination. Recruitment to promoters depends on H3K4me. Also acetylates non-histone proteins. In addition to protein acetyltransferase, can use different acyl-CoA substrates, such as 2-hydroxyisobutanoyl-CoA (2-hydroxyisobutyryl-CoA) or (2E)-butenoyl-CoA (crotonyl-CoA), and is able to mediate protein 2-hydroxyisobutyrylation and crotonylation, respectively. The chain is Histone acetyltransferase ESA1 (ESA1) from Gibberella zeae (strain ATCC MYA-4620 / CBS 123657 / FGSC 9075 / NRRL 31084 / PH-1) (Wheat head blight fungus).